The sequence spans 65 residues: MPNPDNRSDNAEKLQEMVQNTIDNFNEAKETAELSNEKDRSAIEAKNQRRLESIDSLKSEIKDES.

Belongs to the Tlp family.

It localises to the spore core. This chain is Small, acid-soluble spore protein Tlp, found in Bacillus anthracis (strain A0248).